The following is a 950-amino-acid chain: MDTSGGNLDSLDDTEPLPELSFEDFLEPTSEKSSQHMEIEALDSEEDNIGGEDLADPANDSLNTPQFKKNVVHILEDKRLNSSGLTVLKSHAIKMVTAGGTPPAKAQVTDVKILNKLKPIPSSTLKIGSTTIATKSTPGSITKTLGNLTQIRTKDGQVIFVQKSVPGTQSSTAVTGSPSGGIRRLVAPSGIQKAVLSKGVTMASTGLVKAAVPAKASTSVPGSAITLKGIQPLAGGTAKASTSSTTATTSPSLAQPNKIQVVRTADGKIIKINQAGPSLLVNAKQGTGTTVTPGGSAATSVKLSPSTGNVVLNKPVGQVVVRTETPVKTATGSVASASATPGKMLVQSGGKQILVSNKNIIKLSPNASATSSTTHTTGGQTPSTSSGLHAIQLPGKGGIQYVRVLNNNKSAAGTSATASIPKTVQTQKITVVRPPAATGVPATSTTTSAAAASPAAASKANLAMGNTNKIVMRSMGGSIVPLPSVQTLVSKRALGAISNASKPASAASSSATPSASQELPRKHRLTDLNVQLKQSASVSSEASDSSDAGPEAKKPRYVITMQQGSQKAASQPVQKLINRTANVQRVVSSSTSPSSNSTKKIYNYVQPTGSNGAKYMICNSGVPQSSTSAMRRGYTGYVENKTRRPPPISPQQHRFKQMGPQQQSKHQQLQAQAKQRIRQQQLPTEQSTPIKVEPKLPTLPPGVKANVPAKPLFEVLKPPATAAAAGAVDPLGGMTSRRKHCNCSKSQCLKLYCDCFANGEFCQDCTCKDCFNNLDYEVERERAIRSCLDRNPSAFKPKITAPNSGDMRLHNKGCNCKRSGCLKNYCECYEAKIPCSSICKCVGCRNMEDRPDVDMDSLDGLMGVEGQKKDKAKNKQLNENRANIYFTDDVIEATIMCMISRIVMHEKQNVAVEDMEREVMEEMGESLTQIIAFAKEKQETSQIDESKPSS.

Disordered regions lie at residues 1 to 63, 366 to 387, 500 to 523, 533 to 552, and 638 to 702; these read MDTS…DSLN, NASATSSTTHTTGGQTPSTSSG, ASKPASAASSSATPSASQELPRKH, KQSASVSSEASDSSDAGPEA, and VENK…LPPG. Over residues 10–26 the composition is skewed to acidic residues; that stretch reads SLDDTEPLPELSFEDFL. Basic and acidic residues predominate over residues 29-39; the sequence is TSEKSSQHMEI. Residues 40–55 are compositionally biased toward acidic residues; sequence EALDSEEDNIGGEDLA. Low complexity-rich tracts occupy residues 366–386, 500–516, 535–548, and 661–682; these read NASATSSTTHTTGGQTPSTSS, ASKPASAASSSATPSAS, SASVSSEASDSSDA, and QQQSKHQQLQAQAKQRIRQQQL. Residues 737 to 849 enclose the CRC domain; it reads RRKHCNCSKS…KCVGCRNMED (113 aa).

The protein belongs to the lin-54 family. As to quaternary structure, component of the DREAM complex at least composed of Myb, Caf1-55, mip40, mip120, mip130, E2f2, Dp, Rbf, Rbf2, lin-52, HDAC1/Rpd3 and l(3)mbt.

The protein localises to the nucleus. Its function is as follows. Component of the DREAM complex, a multiprotein complex that can both act as a transcription activator or repressor depending on the context. In follicle cells, the complex plays a central role in the site-specific DNA replication at the chorion loci. During development, the complex represses transcription of developmentally controlled E2F target genes. In Drosophila melanogaster (Fruit fly), this protein is Protein lin-54 homolog (mip120).